The sequence spans 398 residues: Elongation factor Tu (398 aa).

Residues 10–207 (KPHVNIGTIG…TVDEYIPEPE (198 aa)) enclose the tr-type G domain. The segment at 19 to 26 (GHVDHGKT) is G1. 19-26 (GHVDHGKT) provides a ligand contact to GTP. Thr26 is a binding site for Mg(2+). Residues 63–67 (GITIN) form a G2 region. The segment at 84–87 (DAPG) is G3. GTP contacts are provided by residues 84–88 (DAPGH) and 139–142 (NKVD). Residues 139–142 (NKVD) form a G4 region. The tract at residues 177–179 (SAL) is G5.

This sequence belongs to the TRAFAC class translation factor GTPase superfamily. Classic translation factor GTPase family. EF-Tu/EF-1A subfamily. In terms of assembly, monomer.

The protein resides in the cytoplasm. The catalysed reaction is GTP + H2O = GDP + phosphate + H(+). GTP hydrolase that promotes the GTP-dependent binding of aminoacyl-tRNA to the A-site of ribosomes during protein biosynthesis. The chain is Elongation factor Tu from Streptococcus agalactiae serotype V (strain ATCC BAA-611 / 2603 V/R).